Consider the following 93-residue polypeptide: Cobalt transport protein CbiN (93 aa).

A run of 2 helical transmembrane segments spans residues 5-25 and 63-83; these read LMLLAMVVALVILPFFINHGG and LLFTLQGSLGAAVIFYILGYC.

Belongs to the CbiN family. In terms of assembly, forms an energy-coupling factor (ECF) transporter complex composed of an ATP-binding protein (A component, CbiO), a transmembrane protein (T component, CbiQ) and 2 possible substrate-capture proteins (S components, CbiM and CbiN) of unknown stoichimetry.

The protein resides in the cell inner membrane. It participates in cofactor biosynthesis; adenosylcobalamin biosynthesis. Its function is as follows. Part of the energy-coupling factor (ECF) transporter complex CbiMNOQ involved in cobalt import. In Salmonella newport (strain SL254), this protein is Cobalt transport protein CbiN.